The chain runs to 129 residues: uncharacterized protein (129 aa).

Disordered stretches follow at residues 1 to 57 and 87 to 129; these read MGGG…LPNH and PVSS…WLWW. Residues 10–20 show a composition bias toward basic and acidic residues; that stretch reads SGEERREKRSG. A compositionally biased stretch (low complexity) spans 87 to 99; that stretch reads PVSSSPSRSPSSS.

This is an uncharacterized protein from Homo sapiens (Human).